The following is a 263-amino-acid chain: Acyl-[acyl-carrier-protein]--UDP-N-acetylglucosamine O-acyltransferase (263 aa).

Belongs to the transferase hexapeptide repeat family. LpxA subfamily. Homotrimer.

It is found in the cytoplasm. The catalysed reaction is a (3R)-hydroxyacyl-[ACP] + UDP-N-acetyl-alpha-D-glucosamine = a UDP-3-O-[(3R)-3-hydroxyacyl]-N-acetyl-alpha-D-glucosamine + holo-[ACP]. It participates in glycolipid biosynthesis; lipid IV(A) biosynthesis; lipid IV(A) from (3R)-3-hydroxytetradecanoyl-[acyl-carrier-protein] and UDP-N-acetyl-alpha-D-glucosamine: step 1/6. In terms of biological role, involved in the biosynthesis of lipid A, a phosphorylated glycolipid that anchors the lipopolysaccharide to the outer membrane of the cell. The chain is Acyl-[acyl-carrier-protein]--UDP-N-acetylglucosamine O-acyltransferase from Stenotrophomonas maltophilia (strain R551-3).